Reading from the N-terminus, the 246-residue chain is Ribonuclease 3 (246 aa).

One can recognise an RNase III domain in the interval 8-137 (ANRLKTRLGF…LLGAIYLDQG (130 aa)). Position 50 (Glu50) interacts with Mg(2+). Asp54 is an active-site residue. Asp123 and Glu126 together coordinate Mg(2+). Glu126 is a catalytic residue. A DRBM domain is found at 164–233 (DYKTELQEIL…AKDAFQHLEG (70 aa)). The segment at 212 to 246 (SGHSKKEAEQQAAKDAFQHLEGMGKSGHKSAGPIR) is disordered.

This sequence belongs to the ribonuclease III family. As to quaternary structure, homodimer. Mg(2+) is required as a cofactor.

It localises to the cytoplasm. It carries out the reaction Endonucleolytic cleavage to 5'-phosphomonoester.. In terms of biological role, digests double-stranded RNA. Involved in the processing of primary rRNA transcript to yield the immediate precursors to the large and small rRNAs (23S and 16S). Processes some mRNAs, and tRNAs when they are encoded in the rRNA operon. Processes pre-crRNA and tracrRNA of type II CRISPR loci if present in the organism. This chain is Ribonuclease 3, found in Desulforamulus reducens (strain ATCC BAA-1160 / DSM 100696 / MI-1) (Desulfotomaculum reducens).